The primary structure comprises 390 residues: Transposase for insertion sequence element IS256 in transposon Tn4001 (390 aa).

This sequence belongs to the transposase mutator family.

Required for the transposition of the insertion element. The protein is Transposase for insertion sequence element IS256 in transposon Tn4001 of Enterococcus faecalis (strain ATCC 700802 / V583).